A 319-amino-acid chain; its full sequence is D-alanine--D-alanine ligase (319 aa).

In terms of domain architecture, ATP-grasp spans 109-313 (KRVWLAEGLP…YEQLCLHILQ (205 aa)). 139 to 194 (PDDLGLPLIVKPPREGSSIGVTKVLGYSQMQDAVALSARHDPDVLCEEFIDGAEVT) contributes to the ATP binding site. The Mg(2+) site is built by aspartate 266, glutamate 280, and asparagine 282.

This sequence belongs to the D-alanine--D-alanine ligase family. Requires Mg(2+) as cofactor. The cofactor is Mn(2+).

The protein resides in the cytoplasm. The catalysed reaction is 2 D-alanine + ATP = D-alanyl-D-alanine + ADP + phosphate + H(+). The protein operates within cell wall biogenesis; peptidoglycan biosynthesis. Functionally, cell wall formation. This is D-alanine--D-alanine ligase from Methylibium petroleiphilum (strain ATCC BAA-1232 / LMG 22953 / PM1).